Consider the following 580-residue polypeptide: mRNA-decapping enzyme 1A (580 aa).

A Phosphoserine modification is found at Ser62. The span at 132 to 141 (RSQQAARDKQ) shows a compositional bias: basic and acidic residues. Disordered stretches follow at residues 132 to 154 (RSQQ…DHRP), 172 to 209 (QMGD…QDKS), and 245 to 276 (LPGD…NMGI). Ser142, Ser179, and Ser180 each carry phosphoserine. Polar residues predominate over residues 173 to 196 (MGDSNISSPGLQPSTQISNLGSTE). Residues 253-264 (EPSSFLPFSFEP) are compositionally biased toward low complexity. Phosphoserine is present on residues Ser319 and Ser334. The span at 343-359 (QAVKTTPRQRSPLSSQP) shows a compositional bias: polar residues. The disordered stretch occupies residues 343–371 (QAVKTTPRQRSPLSSQPVPELSQASLAAS). Phosphothreonine is present on Thr348. The residue at position 353 (Ser353) is a Phosphoserine. Residue Arg376 is modified to Asymmetric dimethylarginine. At Thr401 the chain carries Phosphothreonine. 4 positions are modified to phosphoserine: Ser422, Ser520, Ser521, and Ser523. The interval 510–533 (TRSSDLERKASSPSPLTVGTSENQ) is disordered. The span at 520-531 (SSPSPLTVGTSE) shows a compositional bias: polar residues. Phosphothreonine occurs at positions 526 and 529.

The protein belongs to the DCP1 family. In terms of assembly, forms a complex with EDC3, DCP2, DDX6 and EDC4/HEDLS, within this complex directly interacts with EDC3. Part of a cytoplasmic complex containing proteins involved in mRNA decay, including XRN1 and LSM1. Interacts with DCP1B. Interacts with DCP2. Interacts with DDX17 in an RNA-independent manner. Interacts with PNRC2. Interacts with SMAD4. Interacts with UPF1. Interacts with ZC3HAV1. Interacts with ZFP36L1. Interacts with NBDY. Interacts with DHX34; the interaction is RNA-independent. (Microbial infection) Cleaved by porcine reproductive and respiratory syndrome virus serine protease nsp4 after Glu-238. The cleavage inhibits DCP1A function.

It is found in the cytoplasm. It localises to the P-body. The protein resides in the nucleus. The enzyme catalyses a 5'-end (N(7)-methyl 5'-triphosphoguanosine)-ribonucleoside in mRNA + H2O = N(7)-methyl-GDP + a 5'-end phospho-ribonucleoside in mRNA + 2 H(+). In terms of biological role, necessary for the degradation of mRNAs, both in normal mRNA turnover and in nonsense-mediated mRNA decay. Removes the 7-methyl guanine cap structure from mRNA molecules, yielding a 5'-phosphorylated mRNA fragment and 7m-GDP. Contributes to the transactivation of target genes after stimulation by TGFB1. Essential for embryonic development. In Sus scrofa (Pig), this protein is mRNA-decapping enzyme 1A (DCP1A).